The following is a 145-amino-acid chain: Polytheonamide B (145 aa).

Positions 1–96 (MADSDNTPTS…DDDLDQAAGG (96 aa)) are excised as a propeptide. Threonine 97 bears the 2-oxo-5,5-dimethylhexanoate mark. Isoleucine 99 is subject to 3-methylisoleucine. Position 101 is a 3-methylvaline (valine 101). Valine 102 bears the 3-methyl-D-valine mark. Position 103 is a 3-methylvaline (valine 103). The residue at position 104 (alanine 104) is a D-alanine (Ala). Valine 105 carries the 3-methylvaline modification. A 3-methyl-D-valine mark is found at valine 106 and valine 110. Asparagine 112 carries the post-translational modification N4-methyl-D-asparagine. Threonine 113 carries the post-translational modification 3-hydroxyvaline (Thr). Residue valine 117 is modified to 3-methylvaline. Asparagine 118 is subject to N4-methyl-D-asparagine. Glutamine 119 carries the post-translational modification (3S)-3-methylglutamine. Valine 120 carries the post-translational modification 3-hydroxy-D-valine. Asparagine 124 carries the N4-methyl-D-asparagine modification. Asparagine 126 is subject to (3R)-N4-methyl-3-hydroxy-D-asparagine. A 3-methylvaline modification is found at valine 127. Valine 128 bears the 3-hydroxy-D-valine mark. Asparagine 130 and asparagine 132 each carry N4-methyl-D-asparagine. Position 134 is a (3R)-N4-methyl-3-hydroxy-D-asparagine (asparagine 134). Asparagine 136 carries the post-translational modification N4-methyl-D-asparagine. D-serine (Ser) is present on serine 138. The residue at position 140 (asparagine 140) is a D-asparagine. The residue at position 141 (methionine 141) is a 3,3-dimethylmethionine. A D-asparagine modification is found at asparagine 142. Position 144 is a D-threonine (threonine 144).

In terms of processing, epimerization of most, and perhaps all, L- to D-amino acids is catalyzed by PoyD, when PoyA and PoyD are coexpressed in E.coli. Post-translationally, N-methylations are catalyzed by PoyE, when PoyA and PoyE are coexpressed in E.coli. To obtain 2-oxo-5,5-dimethylhexanoate, Thr-97 is firstly dehydrated by PoyF. The second step possibly corresponds to methylation by PoyB/C, and the third step may be a cleavage by PoyH/J.

Its function is as follows. Antimicrobial peptide active against Gram-positive bacteria (MIC=4-&gt;125 ug/ml). May act by forming transmembrane ion channels, since the peptide rapidly depolarizes the bacterial cytoplasmic membrane, simultaneously decreasing the membrane potential and intracellular potassium contents. The chain is Polytheonamide B from Bacterium symbiont subsp. Theonella swinhoei (strain pTSMAC1).